The primary structure comprises 383 residues: Lipid-A-disaccharide synthase (383 aa).

This sequence belongs to the LpxB family.

The catalysed reaction is 2-N,3-O-bis[(3R)-3-hydroxytetradecanoyl]-alpha-D-glucosaminyl 1-phosphate + UDP-2-N,3-O-bis[(3R)-3-hydroxytetradecanoyl]-alpha-D-glucosamine = lipid A disaccharide (E. coli) + UDP + H(+). It carries out the reaction a lipid X + a UDP-2-N,3-O-bis[(3R)-3-hydroxyacyl]-alpha-D-glucosamine = a lipid A disaccharide + UDP + H(+). It functions in the pathway glycolipid biosynthesis; lipid IV(A) biosynthesis; lipid IV(A) from (3R)-3-hydroxytetradecanoyl-[acyl-carrier-protein] and UDP-N-acetyl-alpha-D-glucosamine: step 5/6. Functionally, condensation of UDP-2,3-diacylglucosamine and 2,3-diacylglucosamine-1-phosphate to form lipid A disaccharide, a precursor of lipid A, a phosphorylated glycolipid that anchors the lipopolysaccharide to the outer membrane of the cell. This Pectobacterium atrosepticum (strain SCRI 1043 / ATCC BAA-672) (Erwinia carotovora subsp. atroseptica) protein is Lipid-A-disaccharide synthase.